Here is a 217-residue protein sequence, read N- to C-terminus: MAKIQRVTEATLPTEFGIFKIVGFEFPDTKKEHVALVMGDVEDGQPVLARIHSECLTGDALHSLKCDCGFQLARALRQISEEGRGVLIYHREEGRGIGLINKIRAYALQDQGMDTIEANLALGFKADERNFSVCADIFEQLGVKAVRLLTNNPAKIETMKSAGINVVERVPLNVGENRYNVGYLDTKAKKMGHYIVHNNKKHFLECPHCQSEIPADE.

50–54 (RIHSE) provides a ligand contact to GTP. Zn(2+)-binding residues include cysteine 55, cysteine 66, and cysteine 68. Residues glutamine 71, 93 to 95 (EGR), and threonine 115 each bind GTP. Aspartate 127 (proton acceptor) is an active-site residue. The active-site Nucleophile is the arginine 129. GTP-binding residues include threonine 150 and lysine 155.

The protein belongs to the GTP cyclohydrolase II family. Zn(2+) is required as a cofactor.

The catalysed reaction is GTP + 4 H2O = 2,5-diamino-6-hydroxy-4-(5-phosphoribosylamino)-pyrimidine + formate + 2 phosphate + 3 H(+). The protein operates within cofactor biosynthesis; riboflavin biosynthesis; 5-amino-6-(D-ribitylamino)uracil from GTP: step 1/4. Functionally, catalyzes the conversion of GTP to 2,5-diamino-6-ribosylamino-4(3H)-pyrimidinone 5'-phosphate (DARP), formate and pyrophosphate. This is GTP cyclohydrolase-2 from Actinobacillus succinogenes (strain ATCC 55618 / DSM 22257 / CCUG 43843 / 130Z).